A 236-amino-acid polypeptide reads, in one-letter code: uncharacterized protein (236 aa).

The first 29 residues, 1–29 (MKGGDKMKKLILLMLLLPISLIGCTDEES), serve as a signal peptide directing secretion.

This is an uncharacterized protein from Archaeoglobus fulgidus (strain ATCC 49558 / DSM 4304 / JCM 9628 / NBRC 100126 / VC-16).